The sequence spans 427 residues: Serine hydroxymethyltransferase (427 aa).

(6S)-5,6,7,8-tetrahydrofolate contacts are provided by residues Leu-127 and 131–133; that span reads GHL. The residue at position 236 (Lys-236) is an N6-(pyridoxal phosphate)lysine.

Belongs to the SHMT family. In terms of assembly, homodimer. The cofactor is pyridoxal 5'-phosphate.

The protein resides in the cytoplasm. It carries out the reaction (6R)-5,10-methylene-5,6,7,8-tetrahydrofolate + glycine + H2O = (6S)-5,6,7,8-tetrahydrofolate + L-serine. Its pathway is one-carbon metabolism; tetrahydrofolate interconversion. The protein operates within amino-acid biosynthesis; glycine biosynthesis; glycine from L-serine: step 1/1. Catalyzes the reversible interconversion of serine and glycine with tetrahydrofolate (THF) serving as the one-carbon carrier. This reaction serves as the major source of one-carbon groups required for the biosynthesis of purines, thymidylate, methionine, and other important biomolecules. Also exhibits THF-independent aldolase activity toward beta-hydroxyamino acids, producing glycine and aldehydes, via a retro-aldol mechanism. The protein is Serine hydroxymethyltransferase of Paramagnetospirillum magneticum (strain ATCC 700264 / AMB-1) (Magnetospirillum magneticum).